The primary structure comprises 36 residues: Potassium channel toxin alpha-KTx 16.5 (36 aa).

3 disulfides stabilise this stretch: Cys7-Cys28, Cys13-Cys33, and Cys17-Cys35. An interaction with Ca(2+)-activated K(+) channels region spans residues 26–33; it reads GKCQNKQC.

This sequence belongs to the short scorpion toxin superfamily. Potassium channel inhibitor family. Alpha-KTx 16 subfamily. In terms of tissue distribution, expressed by the venom gland.

Its subcellular location is the secreted. Augments responses to direct muscle stimulation probably by blocking calcium-activated potassium channels. The sequence is that of Potassium channel toxin alpha-KTx 16.5 from Leiurus hebraeus (Hebrew deathstalker scorpion).